The chain runs to 1479 residues: Tyrosine-protein kinase BAZ1B (1479 aa).

A WAC domain is found at 20 to 126; that stretch reads EPLFTIPHTQ…GEECDFEVGK (107 aa). The segment at 146–212 is disordered; sequence EAVEKKSDGA…TSLKKGERKW (67 aa). Composition is skewed to basic and acidic residues over residues 148–165 and 173–195; these read VEKKSDGACDSPSSDKEN and LQKKETVVKEDEGRRESINDRAR. Residues Ser-152, Ser-158, and Ser-161 each carry the phosphoserine modification. Positions 207–213 match the C motif motif; that stretch reads KGERKWA. At Thr-266 the chain carries Phosphothreonine. The interval 302–333 is disordered; the sequence is NPSTKRRNTGSPDRKPSKKPKRDSSSLSSPLN. 5 positions are modified to phosphoserine: Ser-325, Ser-330, Ser-345, Ser-361, and Ser-374. Disordered regions lie at residues 376-433 and 448-472; these read NNNK…KTPK and TQKMTRTPRSSGGVPRSSGKPHKHL. The segment covering 381 to 396 has biased composition (basic residues); that stretch reads HSFHIPKKGPAAKKPG. The segment covering 415–425 has biased composition (polar residues); sequence GQKSTGNSKSP. The segment covering 454–465 has biased composition (low complexity); the sequence is TPRSSGGVPRSS. Residues 537-587 adopt a coiled-coil conformation; it reads ASMSEEQRKEYLKKKRQELKERLREKAKERREREMLERLEKQKRFEDQELG. The region spanning 605–669 is the DDT domain; the sequence is NTLFGDVALV…LQTLLQDEIA (65 aa). Phosphoserine is present on residues Ser-706, Ser-709, and Ser-717. Residues 774 to 809 are a coiled coil; that stretch reads SAELWKERLAVLKEENDKKRAEKQKRKEMEARNKEN. A disordered region spans residues 789 to 813; it reads NDKKRAEKQKRKEMEARNKENGKEE. Lys-827 is covalently cross-linked (Glycyl lysine isopeptide (Lys-Gly) (interchain with G-Cter in SUMO1); alternate). A Glycyl lysine isopeptide (Lys-Gly) (interchain with G-Cter in SUMO2); alternate cross-link involves residue Lys-827. Residues Lys-854, Lys-1043, Lys-1089, and Lys-1107 each participate in a glycyl lysine isopeptide (Lys-Gly) (interchain with G-Cter in SUMO2) cross-link. The stretch at 854-890 forms a coiled coil; that stretch reads KRKREIQERETKVRLEREAEEERMRKHKAAAEKAFQE. A PHD-type zinc finger spans residues 1184 to 1234; that stretch reads NARCKVCRKKGEDDKLILCDECNKAFHLFCLRPALYEVPDGEWQCPACQPP. Residues 1231 to 1324 form a disordered region; the sequence is CQPPTARRNS…SRPKDDPEVD (94 aa). A compositionally biased stretch (acidic residues) spans 1254 to 1277; that stretch reads SEGDESGEEEEEEEEEEEEEEDYE. Positions 1257–1284 form a coiled coil; sequence DESGEEEEEEEEEEEEEEDYEVAGLRLR. A compositionally biased stretch (basic residues) spans 1305–1316; that stretch reads PGKKSHPARRSR. Ser-1315 carries the phosphoserine modification. The residue at position 1331 (Lys-1331) is an N6-acetyllysine. The Bromo domain occupies 1335–1439; that stretch reads RRQSLELQKC…QCLLALLQKH (105 aa). A phosphoserine mark is found at Ser-1338, Ser-1464, Ser-1466, and Ser-1468. The segment at 1451–1479 is disordered; that stretch reads RKFPDRLADDEGDSDSESVGQSRGRRQKK.

Belongs to the WAL family. BAZ1B subfamily. In terms of assembly, component of the WICH-1 ISWI chromatin remodeling complex, at least composed of SMARCA1 and BAZ1B/WSTF, which regulates the spacing of histone octamers on the DNA template to facilitate access to DNA. Within the WICH-1 ISWI chromatin remodeling complex interacts with SMARCA1; the interaction is direct. Component of the WICH-5 ISWI chromatin remodeling complex (also called the WICH complex), at least composed of SMARCA5/SNF2H and BAZ1B/WSTF, which regulates the spacing of histone octamers on the DNA template to facilitate access to DNA. Within the WICH-5 ISWI chromatin remodeling complex interacts with SMARCA5/SNF2H; the interaction is direct. Component of the B-WICH chromatin remodeling complex, at least composed of SMARCA5/SNF2H, BAZ1B/WSTF, SF3B1, DEK, MYO1C, ERCC6, MYBBP1A and DDX21. Within the B-WICH chromatin remodeling complex, interacts with SMARCA5/SNF2H, DDX21, DEK, MYBBP1A, SF3B1 and ERCC6. Interacts with MYO1C. Interacts with PCNA; the interaction is direct and is required for BAZ1B/WSTF binding to replication foci during S phase. Interacts with CDT1. Mn(2+) serves as cofactor.

Its subcellular location is the nucleus. The enzyme catalyses L-tyrosyl-[protein] + ATP = O-phospho-L-tyrosyl-[protein] + ADP + H(+). Its function is as follows. Atypical tyrosine-protein kinase that plays a central role in chromatin remodeling and acts as a transcription regulator. Involved in DNA damage response by phosphorylating 'Tyr-142' of histone H2AX (H2AXY142ph). H2AXY142ph plays a central role in DNA repair and acts as a mark that distinguishes between apoptotic and repair responses to genotoxic stress. Regulatory subunit of the ATP-dependent WICH-1 and WICH-5 ISWI chromatin remodeling complexes, which form ordered nucleosome arrays on chromatin and facilitate access to DNA during DNA-templated processes such as DNA replication, transcription, and repair. Both complexes regulate the spacing of nucleosomes along the chromatin and have the ability to slide mononucleosomes to the center of a DNA template. The WICH-1 ISWI chromatin remodeling complex has a lower ATP hydrolysis rate than the WICH-5 ISWI chromatin remodeling complex. The WICH-5 ISWI chromatin remodeling complex regulates the transcription of various genes, has a role in RNA polymerase I transcription. Within the B-WICH complex has a role in RNA polymerase III transcription. Mediates the recruitment of the WICH-5 ISWI chromatin remodeling complex to replication foci during DNA replication. The polypeptide is Tyrosine-protein kinase BAZ1B (Baz1b) (Mus musculus (Mouse)).